The sequence spans 52 residues: uncharacterized protein (52 aa).

This is an uncharacterized protein from Treponema pallidum (strain Nichols).